Consider the following 1620-residue polypeptide: MPARTAPARVPALASPAGSLPDHVRRRLKDLERDGLTEKECVREKLNLLHEFLQTEIKSQLCDLETKLHKEELSEEGYLAKVKSLLNKDLSLENGTHTLTQKANGCPANGSRPTWRAEMADSNRSPRSRPKPRGPRRSKSDSDTLSVETSPSSVATRRTTRQTTITAHFTKGPTKRKPKEESEEGNSAESAAEERDQDKKRRVVDTESGAAAAVEKLEEVTAGTQLGPEEPCEQEDDNRSLRRHTRELSLRRKSKEDPDREARPETHLDEDEDGKKDKRSSRPRSQPRDPAAKRRPKEAEPEQVAPETPEDRDEDEREEKRRKTTRKKLESHTVPVQSRSERKAAQSKSVIPKINSPKCPECGQHLDDPNLKYQQHPEDAVDEPQMLTSEKLSIYDSTSTWFDTYEDSPMHRFTSFSVYCSRGHLCPVDTGLIEKNVELYFSGCAKAIHDENPSMEGGINGKNLGPINQWWLSGFDGGEKVLIGFSTAFAEYILMEPSKEYEPIFGLMQEKIYISKIVVEFLQNNPDAVYEDLINKIETTVPPSTINVNRFTEDSLLRHAQFVVSQVESYDEAKDDDETPIFLSPCMRALIHLAGVSLGQRRATRRVMGATKEKDKAPTKATTTKLVYQIFDTFFSEQIEKYDKEDKENAMKRRRCGVCEVCQQPECGKCKACKDMVKFGGTGRSKQACLKRRCPNLAVKEADDDEEADDDVSEMPSPKKLHQGKKKKQNKDRISWLGQPMKIEENRTYYQKVSIDEEMLEVGDCVSVIPDDSSKPLYLARVTALWEDKNGQMMFHAHWFCAGTDTVLGATSDPLELFLVGECENMQLSYIHSKVKVIYKAPSENWAMEGGTDPETTLPGAEDGKTYFFQLWYNQEYARFESPPKTQPTEDNKHKFCLSCIRLAELRQKEMPKVLEQIEEVDGRVYCSSITKNGVVYRLGDSVYLPPEAFTFNIKVASPVKRPKKDPVNETLYPEHYRKYSDYIKGSNLDAPEPYRIGRIKEIHCGKKKGKVNEADIKLRLYKFYRPENTHRSYNGSYHTDINMLYWSDEEAVVNFSDVQGRCTVEYGEDLLESIQDYSQGGPDRFYFLEAYNSKTKNFEDPPNHARSPGNKGKGKGKGKGKGKHQVSEPKEPEAAIKLPKLRTLDVFSGCGGLSEGFHQAGISETLWAIEMWDPAAQAFRLNNPGTTVFTEDCNVLLKLVMAGEVTNSLGQRLPQKGDVEMLCGGPPCQGFSGMNRFNSRTYSKFKNSLVVSFLSYCDYYRPRFFLLENVRNFVSYRRSMVLKLTLRCLVRMGYQCTFGVLQAGQYGVAQTRRRAIILAAAPGEKLPLFPEPLHVFAPRACQLSVVVDDKKFVSNITRLSSGPFRTITVRDTMSDLPEIQNGASNSEIPYNGEPLSWFQRQLRGSHYQPILRDHICKDMSPLVAARMRHIPLFPGSDWRDLPNIQVRLGDGVIAHKLQYTFHDVKNGYSSTGALRGVCSCAEGKACDPESRQFSTLIPWCLPHTGNRHNHWAGLYGRLEWDGFFSTTVTNPEPMGKQGRVLHPEQHRVVSVRECARSQGFPDSYRFFGNILDRHRQVGNAVPPPLAKAIGLEIKLCLLSSARESASAAVKAKEEAATKD.

The tract at residues Met-1–Pro-21 is disordered. Residues Met-1 to Ala-120 form an interaction with DMAP1 region. Residues Met-1–Leu-145 form an interaction with DNMT3A region. Interaction with the PRC2/EED-EZH2 complex stretches follow at residues Met-1 to Lys-343 and Ala-305 to Gly-609. The residue at position 15 (Ser-15) is a Phosphoserine. The DMAP1-binding domain maps to Pro-16–Asn-109. At Lys-70 the chain carries N6,N6-dimethyllysine; by EHMT2. Positions Thr-96–Pro-369 are disordered. A compositionally biased stretch (basic residues) spans Pro-126–Arg-137. Ser-138 carries the phosphoserine modification. Lys-139 carries the N6-methyllysine; by SETD7 modification. The residue at position 140 (Ser-140) is a Phosphoserine. Residues Thr-144–Ala-155 show a composition bias toward polar residues. Position 146 is a phosphoserine; by CK1 (Ser-146). An interaction with DNMT3B region spans residues Val-147–Leu-217. Phosphoserine is present on residues Ser-150 and Ser-152. The interval Arg-161–Gly-172 is interaction with PCNA. At Thr-164 the chain carries Phosphothreonine. At Lys-171 the chain carries N6-acetyllysine. A Nuclear localization signal motif is present at residues Lys-175–Arg-202. A compositionally biased stretch (basic and acidic residues) spans Ala-192–Asp-205. A Phosphoserine modification is found at Ser-240. Basic and acidic residues-rich tracts occupy residues Arg-246–His-267 and Gln-286–Glu-300. At Lys-255 the chain carries N6-acetyllysine; alternate. Lys-255 participates in a covalent cross-link: Glycyl lysine isopeptide (Lys-Gly) (interchain with G-Cter in SUMO2); alternate. Positions Thr-308–Arg-317 are enriched in acidic residues. The interval Lys-328 to Leu-556 is DNA replication foci-targeting sequence. Zn(2+) is bound by residues Cys-359 and Cys-362. Lys-372 bears the N6-acetyllysine mark. The Zn(2+) site is built by Cys-420 and His-424. Ser-515 and Ser-555 each carry phosphoserine. Residues Asn-649–Pro-695 form a CXXC-type zinc finger. Zn(2+) contacts are provided by Cys-656, Cys-659, Cys-662, Cys-667, Cys-670, Cys-673, Cys-689, and Cys-694. The interval Asn-696 to Glu-757 is autoinhibitory linker. The segment at Asn-696–Asp-813 is interaction with HDAC1. Residues Ala-702 to Ser-713 show a composition bias toward acidic residues. Residues Ala-702–Asp-732 form a disordered region. Residues Ser-713 and Ser-717 each carry the phosphoserine modification. Residues Lys-719–Asn-730 show a composition bias toward basic residues. Ser-735 carries the phosphoserine modification. An N6-acetyllysine modification is found at Lys-752. Residues Glu-758–Pro-884 form the BAH 1 domain. Phosphoserine is present on Ser-882. Lys-895, Lys-961, Lys-965, and Lys-979 each carry N6-acetyllysine. The 128-residue stretch at His-976–Pro-1103 folds into the BAH 2 domain. The tract at residues Lys-1097–Ala-1136 is disordered. Tandem repeats lie at residues Lys-1112–Gly-1113, Lys-1114–Gly-1115, Lys-1116–Gly-1117, Lys-1118–Gly-1119, Lys-1120–Gly-1121, and Lys-1122–Gly-1123. Positions Lys-1112 to His-1125 are 7 X 2 AA tandem repeats of K-G. The span at Gly-1113–His-1125 shows a compositional bias: basic residues. An N6-acetyllysine mark is found at Lys-1114, Lys-1116, Lys-1118, Lys-1120, Lys-1122, and Lys-1124. One copy of the 7; approximate repeat lies at Lys-1124–His-1125. The interval Lys-1124–Asp-1620 is interaction with the PRC2/EED-EZH2 complex. The segment covering Gln-1126–Ala-1135 has biased composition (basic and acidic residues). In terms of domain architecture, SAM-dependent MTase C5-type spans Leu-1142 to Ser-1601. Residues Leu-1142 to Asp-1620 are catalytic. Residues Ser-1149, Gly-1153 to Leu-1154, Glu-1171 to Met-1172, and Asp-1193 to Cys-1194 contribute to the S-adenosyl-L-methionine site. Cys-1229 is an active-site residue. N6-acetyllysine is present on residues Lys-1352 and Lys-1418. Val-1582 is an S-adenosyl-L-methionine binding site. Residue Lys-1611 forms a Glycyl lysine isopeptide (Lys-Gly) (interchain with G-Cter in SUMO2) linkage.

The protein belongs to the class I-like SAM-binding methyltransferase superfamily. C5-methyltransferase family. Homodimer. Forms a stable complex with E2F1, BB1 and HDAC1. Forms a complex with DMAP1 and HDAC2, with direct interaction. Interacts with the PRC2/EED-EZH2 complex. Probably part of a corepressor complex containing ZNF304, TRIM28, SETDB1 and DNMT1. Interacts with UHRF1; promoting its recruitment to hemimethylated DNA. Interacts with USP7, promoting its deubiquitination. Interacts with BAZ2A/TIP5. Interacts with PCNA. Interacts with MBD2 and MBD3. Interacts with DNMT3A and DNMT3B. Interacts with UBC9. Interacts with HDAC1. Interacts with CSNK1D. Interacts with SIRT7. Interacts with ZNF263; recruited to the SIX3 promoter along with other proteins involved in chromatin modification and transcriptional corepression where it contributes to transcriptional repression. Interacts with L3MBTL3 and DCAF5; the interaction requires DNMT1 methylation at Lys-139 and is necessary to target DNMT1 for ubiquitination by the CRL4-DCAF5 E3 ubiquitin ligase complex and proteasomal degradation. Interacts with PHF20L1; the interaction requires DNMT1 methylation at Lys-139 and protects DNMT1 from ubiquitination and proteasomal degradation. In terms of processing, sumoylated; sumoylation increases activity. Phosphorylation at Ser-146 by CK1 reduces DNA-binding activity. Post-translationally, acetylation on multiple lysines, mainly by KAT2B/PCAF, regulates cell cycle G(2)/M transition. Deacetylation of Lys-1352 and Lys-1418 by SIRT1 increases methyltransferase activity. In terms of processing, phosphorylation of Ser-152 by CDKs is important for enzymatic activity and protein stability. Phosphorylation of Ser-140 by AKT1 prevents methylation by SETD7 thereby increasing DNMT1 stability. Methylation at Lys-139 by SETD7 is necessary for the regulation of DNMT1 proteasomal degradation. Post-translationally, ubiquitinated by UHRF1; interaction with USP7 counteracts ubiquitination by UHRF1 by promoting deubiquitination and preventing degradation by the proteasome. As to expression, isoform 1 is expressed in embryonic stem cells and in somatic tissues. Isoform 2 is expressed in oocytes, preimplantation embryos, testis and in skeletal muscle during myogenesis.

Its subcellular location is the nucleus. The protein localises to the cytoplasm. The catalysed reaction is a 2'-deoxycytidine in DNA + S-adenosyl-L-methionine = a 5-methyl-2'-deoxycytidine in DNA + S-adenosyl-L-homocysteine + H(+). Its activity is regulated as follows. Allosterically regulated. The binding of 5-methylcytosine-containing DNA to the N-terminal parts of DNMT1 causes an allosteric activation of the catalytic domain by a direct interaction of its Zn-binding domain with the catalytic domain. In terms of biological role, methylates CpG residues. Preferentially methylates hemimethylated DNA. Associates with DNA replication sites in S phase maintaining the methylation pattern in the newly synthesized strand, that is essential for epigenetic inheritance. Associates with chromatin during G2 and M phases to maintain DNA methylation independently of replication. It is responsible for maintaining methylation patterns established in development. DNA methylation is coordinated with methylation of histones. Mediates transcriptional repression by direct binding to HDAC2. In association with DNMT3B and via the recruitment of CTCFL/BORIS, involved in activation of BAG1 gene expression by modulating dimethylation of promoter histone H3 at H3K4 and H3K9. Probably forms a corepressor complex required for activated KRAS-mediated promoter hypermethylation and transcriptional silencing of tumor suppressor genes (TSGs) or other tumor-related genes in colorectal cancer (CRC) cells. Also required to maintain a transcriptionally repressive state of genes in undifferentiated embryonic stem cells (ESCs). Associates at promoter regions of tumor suppressor genes (TSGs) leading to their gene silencing. Promotes tumor growth. This chain is DNA (cytosine-5)-methyltransferase 1 (Dnmt1), found in Mus musculus (Mouse).